The sequence spans 251 residues: Ubiquinone/menaquinone biosynthesis C-methyltransferase UbiE (251 aa).

Residues Thr-74, Asp-95, 123 to 124 (NA), and Ser-140 each bind S-adenosyl-L-methionine.

It belongs to the class I-like SAM-binding methyltransferase superfamily. MenG/UbiE family.

The catalysed reaction is a 2-demethylmenaquinol + S-adenosyl-L-methionine = a menaquinol + S-adenosyl-L-homocysteine + H(+). It carries out the reaction a 2-methoxy-6-(all-trans-polyprenyl)benzene-1,4-diol + S-adenosyl-L-methionine = a 5-methoxy-2-methyl-3-(all-trans-polyprenyl)benzene-1,4-diol + S-adenosyl-L-homocysteine + H(+). It functions in the pathway quinol/quinone metabolism; menaquinone biosynthesis; menaquinol from 1,4-dihydroxy-2-naphthoate: step 2/2. The protein operates within cofactor biosynthesis; ubiquinone biosynthesis. Its function is as follows. Methyltransferase required for the conversion of demethylmenaquinol (DMKH2) to menaquinol (MKH2) and the conversion of 2-polyprenyl-6-methoxy-1,4-benzoquinol (DDMQH2) to 2-polyprenyl-3-methyl-6-methoxy-1,4-benzoquinol (DMQH2). The polypeptide is Ubiquinone/menaquinone biosynthesis C-methyltransferase UbiE (Yersinia pestis bv. Antiqua (strain Angola)).